The chain runs to 551 residues: Nicotianamine aminotransferase B (551 aa).

Residues 24-127 form a disordered region; it reads KSNGHGVAAA…GHAAAAAEEE (104 aa). Positions 86 to 96 are enriched in basic and acidic residues; sequence GHRESNGHAEA. Residues 111-123 show a composition bias toward low complexity; sequence AANGESNGHAAAA. Position 379 is an N6-(pyridoxal phosphate)lysine (K379).

Belongs to the class-I pyridoxal-phosphate-dependent aminotransferase family. It depends on pyridoxal 5'-phosphate as a cofactor. As to expression, expressed in roots, but not in leaves.

It catalyses the reaction nicotianamine + 2-oxoglutarate = 3''-deamino-3''-oxonicotianamine + L-glutamate. Its function is as follows. Involved in biosynthesis of mugineic acid family phytosiderophores. The sequence is that of Nicotianamine aminotransferase B from Hordeum vulgare (Barley).